The chain runs to 315 residues: Methionyl-tRNA formyltransferase (315 aa).

Position 113 to 116 (113 to 116 (SLLP)) interacts with (6S)-5,6,7,8-tetrahydrofolate.

This sequence belongs to the Fmt family.

It catalyses the reaction L-methionyl-tRNA(fMet) + (6R)-10-formyltetrahydrofolate = N-formyl-L-methionyl-tRNA(fMet) + (6S)-5,6,7,8-tetrahydrofolate + H(+). Attaches a formyl group to the free amino group of methionyl-tRNA(fMet). The formyl group appears to play a dual role in the initiator identity of N-formylmethionyl-tRNA by promoting its recognition by IF2 and preventing the misappropriation of this tRNA by the elongation apparatus. The polypeptide is Methionyl-tRNA formyltransferase (Cronobacter sakazakii (strain ATCC BAA-894) (Enterobacter sakazakii)).